The chain runs to 81 residues: MSKLGVVLFTLLLLVPLVTPERDGGKWTMLAKNKKAMKRNLMDFITRTCDPYYCNDGKVCCPEYPTCGDSTGKLICVRVTD.

Residues 1–20 (MSKLGVVLFTLLLLVPLVTP) form the signal peptide. Positions 21-47 (ERDGGKWTMLAKNKKAMKRNLMDFITR) are excised as a propeptide. 3 cysteine pairs are disulfide-bonded: cysteine 49–cysteine 61, cysteine 54–cysteine 67, and cysteine 60–cysteine 76.

The protein belongs to the conotoxin M superfamily. Expressed by the venom duct.

It localises to the secreted. This Conus imperialis (Imperial cone) protein is Conotoxin Im6.1.